A 300-amino-acid polypeptide reads, in one-letter code: NAD kinase (300 aa).

The active-site Proton acceptor is the aspartate 77. NAD(+) is bound by residues 77–78 (DG), 151–152 (ND), histidine 162, arginine 179, aspartate 181, and 192–197 (TAYSLS).

This sequence belongs to the NAD kinase family. A divalent metal cation serves as cofactor.

The protein resides in the cytoplasm. It catalyses the reaction NAD(+) + ATP = ADP + NADP(+) + H(+). Functionally, involved in the regulation of the intracellular balance of NAD and NADP, and is a key enzyme in the biosynthesis of NADP. Catalyzes specifically the phosphorylation on 2'-hydroxyl of the adenosine moiety of NAD to yield NADP. The chain is NAD kinase from Cellvibrio japonicus (strain Ueda107) (Pseudomonas fluorescens subsp. cellulosa).